An 82-amino-acid polypeptide reads, in one-letter code: MKKDIHPDNHQVIFQDVNSGYRFLSHSTKKSEETAEWEDGKTYPLIKVEVSSDTHPFYTGRQKFNEKGGRVEQFNKKYNMGK.

It belongs to the bacterial ribosomal protein bL31 family. Type B subfamily. In terms of assembly, part of the 50S ribosomal subunit.

The polypeptide is Large ribosomal subunit protein bL31B (Bacillus velezensis (strain DSM 23117 / BGSC 10A6 / LMG 26770 / FZB42) (Bacillus amyloliquefaciens subsp. plantarum)).